Here is a 441-residue protein sequence, read N- to C-terminus: Probable D-serine dehydratase (441 aa).

Lysine 115 is subject to N6-(pyridoxal phosphate)lysine.

It belongs to the serine/threonine dehydratase family. DsdA subfamily. The cofactor is pyridoxal 5'-phosphate.

The enzyme catalyses D-serine = pyruvate + NH4(+). In Fusobacterium nucleatum subsp. nucleatum (strain ATCC 25586 / DSM 15643 / BCRC 10681 / CIP 101130 / JCM 8532 / KCTC 2640 / LMG 13131 / VPI 4355), this protein is Probable D-serine dehydratase.